Consider the following 373-residue polypeptide: Flagellar P-ring protein (373 aa).

A signal peptide spans Met1 to Ala26.

This sequence belongs to the FlgI family. As to quaternary structure, the basal body constitutes a major portion of the flagellar organelle and consists of four rings (L,P,S, and M) mounted on a central rod.

The protein localises to the periplasm. It localises to the bacterial flagellum basal body. Assembles around the rod to form the L-ring and probably protects the motor/basal body from shearing forces during rotation. The protein is Flagellar P-ring protein of Rhizobium etli (strain ATCC 51251 / DSM 11541 / JCM 21823 / NBRC 15573 / CFN 42).